The primary structure comprises 108 residues: Ribulose bisphosphate carboxylase small subunit (108 aa).

It belongs to the RuBisCO small chain family. Heterohexadecamer of 8 large and 8 small subunits.

In terms of biological role, ruBisCO catalyzes two reactions: the carboxylation of D-ribulose 1,5-bisphosphate, the primary event in carbon dioxide fixation, as well as the oxidative fragmentation of the pentose substrate. Both reactions occur simultaneously and in competition at the same active site. Although the small subunit is not catalytic it is essential for maximal activity. The sequence is that of Ribulose bisphosphate carboxylase small subunit from Nitrobacter vulgaris.